The chain runs to 233 residues: Transcriptional regulatory protein WalR (233 aa).

The 114-residue stretch at 4-117 folds into the Response regulatory domain; the sequence is KVVVVDDEKP…ELIARVKANL (114 aa). The residue at position 53 (D53) is a 4-aspartylphosphate. A DNA-binding region (ompR/PhoB-type) is located at residues 132 to 231; sequence TNEITIKDIV…RRGVGYFLQQ (100 aa).

Phosphorylated by WalK.

Its subcellular location is the cytoplasm. Functionally, member of the two-component regulatory system WalK/WalR. The polypeptide is Transcriptional regulatory protein WalR (walR) (Staphylococcus haemolyticus (strain JCSC1435)).